A 76-amino-acid polypeptide reads, in one-letter code: ATP synthase subunit 9, mitochondrial (76 aa).

2 consecutive transmembrane segments (helical) span residues 14 to 34 (ISTIGLLGAGIGIAIVFAALI) and 52 to 72 (ILGFALSEATGLFCLMISFLL).

This sequence belongs to the ATPase C chain family. In terms of assembly, F-type ATPases have 2 components, CF(1) - the catalytic core - and CF(0) - the membrane proton channel. CF(1) has five subunits: alpha(3), beta(3), gamma(1), delta(1), epsilon(1). CF(0) has three main subunits: a, b and c.

It localises to the mitochondrion membrane. Its function is as follows. Mitochondrial membrane ATP synthase (F(1)F(0) ATP synthase or Complex V) produces ATP from ADP in the presence of a proton gradient across the membrane which is generated by electron transport complexes of the respiratory chain. F-type ATPases consist of two structural domains, F(1) - containing the extramembraneous catalytic core and F(0) - containing the membrane proton channel, linked together by a central stalk and a peripheral stalk. During catalysis, ATP synthesis in the catalytic domain of F(1) is coupled via a rotary mechanism of the central stalk subunits to proton translocation. Part of the complex F(0) domain. A homomeric c-ring of probably 10 subunits is part of the complex rotary element. The protein is ATP synthase subunit 9, mitochondrial (ATP9) of Vanderwaltozyma polyspora (strain ATCC 22028 / DSM 70294 / BCRC 21397 / CBS 2163 / NBRC 10782 / NRRL Y-8283 / UCD 57-17) (Kluyveromyces polysporus).